A 311-amino-acid chain; its full sequence is Malate dehydrogenase (311 aa).

Residues 7–13 (GAAGGIG) and Asp-34 each bind NAD(+). Substrate contacts are provided by Arg-81 and Arg-87. NAD(+) contacts are provided by residues Asn-94 and 117–119 (ITN). Positions 119 and 153 each coordinate substrate. His-177 acts as the Proton acceptor in catalysis. Met-227 provides a ligand contact to NAD(+).

The protein belongs to the LDH/MDH superfamily. MDH type 1 family. Homodimer.

It carries out the reaction (S)-malate + NAD(+) = oxaloacetate + NADH + H(+). Its function is as follows. Catalyzes the reversible oxidation of malate to oxaloacetate. This is Malate dehydrogenase from Shewanella piezotolerans (strain WP3 / JCM 13877).